The sequence spans 214 residues: MKFFIDTANLDEIREGVELGLVDGVTTNPSLIARENLPFEELIAEICKIVDGPVSAEVISLDAPGMVAEAKKLASIDEKVVIKVPMTAEGLKAVRQLSAAGIKTNVTLIFSANQALLAAKAGASYVSPFVGRLDDIGVNSADLISDILTIFDNYGYASEVIVASVRGPQHVLDSALLGADIATIPLKTIKQLTKHPLTDKGMEQFLADWEKRTQ.

The active-site Schiff-base intermediate with substrate is the Lys-83.

Belongs to the transaldolase family. Type 3B subfamily.

The protein localises to the cytoplasm. It catalyses the reaction D-sedoheptulose 7-phosphate + D-glyceraldehyde 3-phosphate = D-erythrose 4-phosphate + beta-D-fructose 6-phosphate. The protein operates within carbohydrate degradation; pentose phosphate pathway; D-glyceraldehyde 3-phosphate and beta-D-fructose 6-phosphate from D-ribose 5-phosphate and D-xylulose 5-phosphate (non-oxidative stage): step 2/3. Functionally, transaldolase is important for the balance of metabolites in the pentose-phosphate pathway. The sequence is that of Probable transaldolase from Desulfotalea psychrophila (strain LSv54 / DSM 12343).